The primary structure comprises 262 residues: Thrombin-like enzyme gyroxin B1.4 (262 aa).

The N-terminal stretch at 1 to 18 (MVLIRVLANLLILQLSYA) is a signal peptide. The propeptide occupies 19–262 (QKSSELVIGG…AGNTIVNCPP (244 aa)). The region spanning 25–253 (VIGGDECNIN…HLDWIQSIIA (229 aa)) is the Peptidase S1 domain. Disulfide bonds link cysteine 31/cysteine 165, cysteine 52/cysteine 68, cysteine 102/cysteine 260, cysteine 144/cysteine 214, cysteine 176/cysteine 193, and cysteine 204/cysteine 229. Histidine 67 serves as the catalytic Charge relay system. The N-linked (GlcNAc...) asparagine glycan is linked to asparagine 105. Catalysis depends on aspartate 112, which acts as the Charge relay system. The active-site Charge relay system is serine 208.

The protein belongs to the peptidase S1 family. Snake venom subfamily. As to quaternary structure, monomer. Expressed by the venom gland.

The protein resides in the secreted. In terms of biological role, thrombin-like snake venom serine protease. Displays a specificity similar to trypsin. Releases only fibrinopeptide A in the conversion of fibrinogen to fibrin. Shows coagulant, esterase and amidase activities. Reversibly increases the permeability of the blood brain barrier (BBB) in mice. Induces the barrel rotation syndrome in mice, which is manifested by gyroxin-like, rapid rolling motions. This syndrome may be due to its effect on BBB permeability, and certainly also to other actions affecting endogenous substrates present in the endothelium, nervous tissues or blood. The protein is Thrombin-like enzyme gyroxin B1.4 of Crotalus durissus terrificus (South American rattlesnake).